Here is a 100-residue protein sequence, read N- to C-terminus: Cell division protein FtsB (100 aa).

Over 1-3 (MKQ) the chain is Cytoplasmic. The helical transmembrane segment at 4–21 (LIFLLICLLSLLQYRLWL) threads the bilayer. At 22–100 (GDNNLSEYVL…ELRERNPFNR (79 aa)) the chain is on the periplasmic side. Residues 49 to 73 (RNQILKEEIIDLKRGTEAIEERARN) adopt a coiled-coil conformation.

It belongs to the FtsB family. Part of a complex composed of FtsB, FtsL and FtsQ.

Its subcellular location is the cell inner membrane. Essential cell division protein. May link together the upstream cell division proteins, which are predominantly cytoplasmic, with the downstream cell division proteins, which are predominantly periplasmic. This is Cell division protein FtsB from Shewanella frigidimarina (strain NCIMB 400).